Here is a 214-residue protein sequence, read N- to C-terminus: MNKNMNGKFIVLEGLEGAGKTTARQAVVEQLNALGITDLLFTREPGGTPLAEKLRNLIKYETEEPVTDKAELLMLYAARIQLVENVIKPALAQGKWVIGDRHDLSSQAYQGGGRQIDSHLLETLKKTVLGDFEPDFTLYLDLSPAIGLARARGRGELDRIEQQNLAFFDRTRTRYLELVKDNPKAVIINAEQSIERVTADIKTAVKNWVNSISL.

Residue 14-21 (GLEGAGKT) coordinates ATP.

It belongs to the thymidylate kinase family.

The catalysed reaction is dTMP + ATP = dTDP + ADP. Its function is as follows. Phosphorylation of dTMP to form dTDP in both de novo and salvage pathways of dTTP synthesis. The protein is Thymidylate kinase of Mannheimia succiniciproducens (strain KCTC 0769BP / MBEL55E).